A 252-amino-acid polypeptide reads, in one-letter code: Ubiquinone/menaquinone biosynthesis C-methyltransferase UbiE (252 aa).

Residues Thr71, Asp100, Asp124–Ala125, and Ser141 contribute to the S-adenosyl-L-methionine site.

This sequence belongs to the class I-like SAM-binding methyltransferase superfamily. MenG/UbiE family.

The enzyme catalyses a 2-demethylmenaquinol + S-adenosyl-L-methionine = a menaquinol + S-adenosyl-L-homocysteine + H(+). It catalyses the reaction a 2-methoxy-6-(all-trans-polyprenyl)benzene-1,4-diol + S-adenosyl-L-methionine = a 5-methoxy-2-methyl-3-(all-trans-polyprenyl)benzene-1,4-diol + S-adenosyl-L-homocysteine + H(+). The protein operates within quinol/quinone metabolism; menaquinone biosynthesis; menaquinol from 1,4-dihydroxy-2-naphthoate: step 2/2. Its pathway is cofactor biosynthesis; ubiquinone biosynthesis. Its function is as follows. Methyltransferase required for the conversion of demethylmenaquinol (DMKH2) to menaquinol (MKH2) and the conversion of 2-polyprenyl-6-methoxy-1,4-benzoquinol (DDMQH2) to 2-polyprenyl-3-methyl-6-methoxy-1,4-benzoquinol (DMQH2). The protein is Ubiquinone/menaquinone biosynthesis C-methyltransferase UbiE of Caulobacter sp. (strain K31).